The chain runs to 162 residues: Probable chemoreceptor glutamine deamidase CheD (162 aa).

The protein belongs to the CheD family.

It carries out the reaction L-glutaminyl-[protein] + H2O = L-glutamyl-[protein] + NH4(+). Probably deamidates glutamine residues to glutamate on methyl-accepting chemotaxis receptors (MCPs), playing an important role in chemotaxis. This is Probable chemoreceptor glutamine deamidase CheD from Clostridium kluyveri (strain ATCC 8527 / DSM 555 / NBRC 12016 / NCIMB 10680 / K1).